The following is a 282-amino-acid chain: Acetylglutamate kinase (282 aa).

Substrate is bound by residues 62 to 63 (GG), arginine 84, and asparagine 178.

The protein belongs to the acetylglutamate kinase family. ArgB subfamily.

The protein localises to the cytoplasm. The catalysed reaction is N-acetyl-L-glutamate + ATP = N-acetyl-L-glutamyl 5-phosphate + ADP. The protein operates within amino-acid biosynthesis; L-arginine biosynthesis; N(2)-acetyl-L-ornithine from L-glutamate: step 2/4. In terms of biological role, catalyzes the ATP-dependent phosphorylation of N-acetyl-L-glutamate. This chain is Acetylglutamate kinase, found in Kosmotoga olearia (strain ATCC BAA-1733 / DSM 21960 / TBF 19.5.1).